The primary structure comprises 310 residues: Pseudouridine-5'-phosphate glycosidase (310 aa).

Glu-26 functions as the Proton donor in the catalytic mechanism. The substrate site is built by Lys-87 and Val-107. Asp-139 contributes to the Mn(2+) binding site. 141-143 (SAD) is a substrate binding site. Lys-160 functions as the Nucleophile in the catalytic mechanism.

The protein belongs to the pseudouridine-5'-phosphate glycosidase family. As to quaternary structure, homotrimer. The cofactor is Mn(2+).

The catalysed reaction is D-ribose 5-phosphate + uracil = psi-UMP + H2O. In terms of biological role, catalyzes the reversible cleavage of pseudouridine 5'-phosphate (PsiMP) to ribose 5-phosphate and uracil. Functions biologically in the cleavage direction, as part of a pseudouridine degradation pathway. The polypeptide is Pseudouridine-5'-phosphate glycosidase (Roseobacter denitrificans (strain ATCC 33942 / OCh 114) (Erythrobacter sp. (strain OCh 114))).